Reading from the N-terminus, the 118-residue chain is Cytochrome b-c1 complex subunit 7 (118 aa).

The igE-binding. Immunodominant epitope; induces specific IgE antibody production in mice. Causes degranulation of rat basophilic leukemia (RBL) cells and the release of beta-hexosaminidase from them stretch occupies residues 1–32; the sequence is MVHLTKTLRFINNPGFRKFYYGLQGYNKYGLY.

This sequence belongs to the UQCRB/QCR7 family. Component of the ubiquinol-cytochrome c oxidoreductase (cytochrome b-c1 complex, complex III, CIII), a multisubunit enzyme composed of 3 respiratory subunits cytochrome b, cytochrome c1 and Rieske protein, 2 core protein subunits, and additional low-molecular weight protein subunits. The complex exists as an obligatory dimer and forms supercomplexes (SCs) in the inner mitochondrial membrane with cytochrome c oxidase (complex IV, CIV).

It localises to the mitochondrion inner membrane. In terms of biological role, component of the ubiquinol-cytochrome c oxidoreductase, a multisubunit transmembrane complex that is part of the mitochondrial electron transport chain which drives oxidative phosphorylation. The respiratory chain contains 3 multisubunit complexes succinate dehydrogenase (complex II, CII), ubiquinol-cytochrome c oxidoreductase (cytochrome b-c1 complex, complex III, CIII) and cytochrome c oxidase (complex IV, CIV), that cooperate to transfer electrons derived from NADH and succinate to molecular oxygen, creating an electrochemical gradient over the inner membrane that drives transmembrane transport and the ATP synthase. The cytochrome b-c1 complex catalyzes electron transfer from ubiquinol to cytochrome c, linking this redox reaction to translocation of protons across the mitochondrial inner membrane, with protons being carried across the membrane as hydrogens on the quinol. In the process called Q cycle, 2 protons are consumed from the matrix, 4 protons are released into the intermembrane space and 2 electrons are passed to cytochrome c. In Dermatophagoides pteronyssinus (European house dust mite), this protein is Cytochrome b-c1 complex subunit 7.